The primary structure comprises 70 residues: Deleted in esophageal cancer 1 (70 aa).

In terms of tissue distribution, expressed in many tissues, with highest expression in prostate and testis. Reduced expression in esophageal carcinomas.

Candidate tumor suppressor. The polypeptide is Deleted in esophageal cancer 1 (Homo sapiens (Human)).